Reading from the N-terminus, the 493-residue chain is L-arabinose isomerase 1 (493 aa).

The Mn(2+) site is built by glutamate 301, glutamate 326, histidine 343, and histidine 442.

The protein belongs to the arabinose isomerase family. The cofactor is Mn(2+).

The enzyme catalyses beta-L-arabinopyranose = L-ribulose. The protein operates within carbohydrate degradation; L-arabinose degradation via L-ribulose; D-xylulose 5-phosphate from L-arabinose (bacterial route): step 1/3. Functionally, catalyzes the conversion of L-arabinose to L-ribulose. This is L-arabinose isomerase 1 from Bacillus licheniformis (strain ATCC 14580 / DSM 13 / JCM 2505 / CCUG 7422 / NBRC 12200 / NCIMB 9375 / NCTC 10341 / NRRL NRS-1264 / Gibson 46).